A 572-amino-acid polypeptide reads, in one-letter code: Phenylalanine--tRNA ligase beta subunit (572 aa).

Residues Leu285–Pro363 form the B5 domain. The Mg(2+) site is built by Asp341, Asp347, Asp350, and Asp351.

Belongs to the phenylalanyl-tRNA synthetase beta subunit family. Type 2 subfamily. In terms of assembly, tetramer of two alpha and two beta subunits. Mg(2+) serves as cofactor.

It localises to the cytoplasm. The catalysed reaction is tRNA(Phe) + L-phenylalanine + ATP = L-phenylalanyl-tRNA(Phe) + AMP + diphosphate + H(+). In Natronomonas pharaonis (strain ATCC 35678 / DSM 2160 / CIP 103997 / JCM 8858 / NBRC 14720 / NCIMB 2260 / Gabara) (Halobacterium pharaonis), this protein is Phenylalanine--tRNA ligase beta subunit.